A 305-amino-acid polypeptide reads, in one-letter code: Glycine--tRNA ligase alpha subunit (305 aa).

Belongs to the class-II aminoacyl-tRNA synthetase family. In terms of assembly, tetramer of two alpha and two beta subunits.

It localises to the cytoplasm. It catalyses the reaction tRNA(Gly) + glycine + ATP = glycyl-tRNA(Gly) + AMP + diphosphate. In Streptococcus pneumoniae serotype 19F (strain G54), this protein is Glycine--tRNA ligase alpha subunit.